Reading from the N-terminus, the 173-residue chain is T-cell receptor beta-2 chain C region (173 aa).

A c region region spans residues Glu1 to Glu146. N-linked (GlcNAc...) asparagine glycans are attached at residues Asn67 and Asn116. Residues Ile147–Val168 traverse the membrane as a helical segment. Residues Lys169–Ser173 lie on the Cytoplasmic side of the membrane.

The protein resides in the membrane. This chain is T-cell receptor beta-2 chain C region, found in Mus musculus (Mouse).